Here is a 209-residue protein sequence, read N- to C-terminus: Regulator of G-protein signaling 1 (209 aa).

Positions 19-42 (FSASPKDSKEHSHSLLDDKKQKKR) are disordered. Residues 24–38 (KDSKEHSHSLLDDKK) are compositionally biased toward basic and acidic residues. In terms of domain architecture, RGS spans 85-200 (SLEKLLANQT…LKSNIYLNLL (116 aa)).

As to quaternary structure, interacts with GNAI1 and GNAQ. As to expression, detected in spleen, lymph node and intestine.

The protein resides in the cell membrane. It localises to the cytoplasm. It is found in the cytosol. Functionally, regulates G protein-coupled receptor signaling cascades, including signaling downstream of the N-formylpeptide chemoattractant receptors and leukotriene receptors. Inhibits B cell chemotaxis toward CXCL12. Inhibits signal transduction by increasing the GTPase activity of G protein alpha subunits thereby driving them into their inactive GDP-bound form. This chain is Regulator of G-protein signaling 1 (Rgs1), found in Mus musculus (Mouse).